The primary structure comprises 317 residues: Aspartate carbamoyltransferase catalytic subunit (317 aa).

Positions 66 and 67 each coordinate carbamoyl phosphate. K94 is a binding site for L-aspartate. Residues R116, H144, and Q147 each coordinate carbamoyl phosphate. Residues R177 and R231 each coordinate L-aspartate. Carbamoyl phosphate is bound by residues G272 and P273.

The protein belongs to the aspartate/ornithine carbamoyltransferase superfamily. ATCase family. Heterododecamer (2C3:3R2) of six catalytic PyrB chains organized as two trimers (C3), and six regulatory PyrI chains organized as three dimers (R2).

The catalysed reaction is carbamoyl phosphate + L-aspartate = N-carbamoyl-L-aspartate + phosphate + H(+). Its pathway is pyrimidine metabolism; UMP biosynthesis via de novo pathway; (S)-dihydroorotate from bicarbonate: step 2/3. Its function is as follows. Catalyzes the condensation of carbamoyl phosphate and aspartate to form carbamoyl aspartate and inorganic phosphate, the committed step in the de novo pyrimidine nucleotide biosynthesis pathway. This is Aspartate carbamoyltransferase catalytic subunit from Rhodopseudomonas palustris (strain ATCC BAA-98 / CGA009).